We begin with the raw amino-acid sequence, 105 residues long: ATP synthase subunit c (105 aa).

3 helical membrane passes run 3–23 (FLSLFFLALAGVAFAHDGGMG), 32–52 (SILGAMIGLGIAAFGGAIGMG), and 78–98 (VAMAMIEAQVIYTLVFAIIAI).

The protein belongs to the ATPase C chain family. F-type ATPases have 2 components, F(1) - the catalytic core - and F(0) - the membrane proton channel. F(1) has five subunits: alpha(3), beta(3), gamma(1), delta(1), epsilon(1). F(0) has three main subunits: a(1), b(2) and c(10-14). The alpha and beta chains form an alternating ring which encloses part of the gamma chain. F(1) is attached to F(0) by a central stalk formed by the gamma and epsilon chains, while a peripheral stalk is formed by the delta and b chains.

It is found in the cell inner membrane. Functionally, f(1)F(0) ATP synthase produces ATP from ADP in the presence of a proton or sodium gradient. F-type ATPases consist of two structural domains, F(1) containing the extramembraneous catalytic core and F(0) containing the membrane proton channel, linked together by a central stalk and a peripheral stalk. During catalysis, ATP synthesis in the catalytic domain of F(1) is coupled via a rotary mechanism of the central stalk subunits to proton translocation. Key component of the F(0) channel; it plays a direct role in translocation across the membrane. A homomeric c-ring of between 10-14 subunits forms the central stalk rotor element with the F(1) delta and epsilon subunits. The sequence is that of ATP synthase subunit c from Helicobacter pylori (strain Shi470).